The following is a 116-amino-acid chain: Aspartate 1-decarboxylase (116 aa).

Serine 25 (schiff-base intermediate with substrate; via pyruvic acid) is an active-site residue. Serine 25 carries the post-translational modification Pyruvic acid (Ser). Threonine 57 serves as a coordination point for substrate. Tyrosine 58 acts as the Proton donor in catalysis. 73–75 (GAA) lines the substrate pocket.

This sequence belongs to the PanD family. Heterooctamer of four alpha and four beta subunits. It depends on pyruvate as a cofactor. In terms of processing, is synthesized initially as an inactive proenzyme, which is activated by self-cleavage at a specific serine bond to produce a beta-subunit with a hydroxyl group at its C-terminus and an alpha-subunit with a pyruvoyl group at its N-terminus.

The protein localises to the cytoplasm. It catalyses the reaction L-aspartate + H(+) = beta-alanine + CO2. It functions in the pathway cofactor biosynthesis; (R)-pantothenate biosynthesis; beta-alanine from L-aspartate: step 1/1. In terms of biological role, catalyzes the pyruvoyl-dependent decarboxylation of aspartate to produce beta-alanine. The sequence is that of Aspartate 1-decarboxylase from Christiangramia forsetii (strain DSM 17595 / CGMCC 1.15422 / KT0803) (Gramella forsetii).